A 144-amino-acid polypeptide reads, in one-letter code: Mercuric transport protein MerC (144 aa).

Residues 1–21 (MSAITRIIDKIGIVGTIVGSF) lie on the Cytoplasmic side of the membrane. A helical transmembrane segment spans residues 22-42 (SCAMCFPAAASLGAAIGLGFL). Residues C23 and C26 each contribute to the Hg(2+) site. The Periplasmic portion of the chain corresponds to 43–46 (SQWE). Residues 47-67 (GLFVQWLIPIFASVALLATLA) traverse the membrane as a helical segment. Over 68–78 (GWFSHRQWQRT) the chain is Cytoplasmic. A helical membrane pass occupies residues 79-99 (LLGSIGPVLALVGVFGLTHHF). At 100–103 (LDKD) the chain is on the periplasmic side. The helical transmembrane segment at 104–124 (LARVIFYTGLVVMFLVSIWDM) threads the bilayer. The Cytoplasmic portion of the chain corresponds to 125-144 (VNPANRRCATDGCETPAPRS).

As to quaternary structure, monomer.

It is found in the cell inner membrane. Its activity is regulated as follows. Inhibited by the thiol-modifying reagent N-ethylmaleimide (NEM). Functionally, involved in mercuric ion uptake. This chain is Mercuric transport protein MerC, found in Acidithiobacillus ferrooxidans (Thiobacillus ferrooxidans).